Reading from the N-terminus, the 168-residue chain is SPbeta prophage-derived uncharacterized protein YonX (168 aa).

Residues 1-53 adopt a coiled-coil conformation; sequence MNAQLFNLESRLDELENEINTQYCELDTNLDALKSNRIELESQLEKFESSLTN.

This chain is SPbeta prophage-derived uncharacterized protein YonX (yonX), found in Bacillus subtilis (strain 168).